Reading from the N-terminus, the 591-residue chain is Aspartate--tRNA ligase (591 aa).

Residue glutamate 172 coordinates L-aspartate. Residues 196–199 (QLFK) are aspartate. Residue arginine 218 coordinates L-aspartate. ATP contacts are provided by residues 218–220 (RDE) and glutamine 227. Histidine 449 lines the L-aspartate pocket. Glutamate 483 is a binding site for ATP. Arginine 490 is an L-aspartate binding site. Residue 535–538 (GLDR) participates in ATP binding.

Belongs to the class-II aminoacyl-tRNA synthetase family. Type 1 subfamily. In terms of assembly, homodimer.

The protein resides in the cytoplasm. It carries out the reaction tRNA(Asp) + L-aspartate + ATP = L-aspartyl-tRNA(Asp) + AMP + diphosphate. Catalyzes the attachment of L-aspartate to tRNA(Asp) in a two-step reaction: L-aspartate is first activated by ATP to form Asp-AMP and then transferred to the acceptor end of tRNA(Asp). The protein is Aspartate--tRNA ligase of Actinobacillus pleuropneumoniae serotype 7 (strain AP76).